The sequence spans 306 residues: Pantothenate kinase (306 aa).

Residue 90 to 97 (GSVAVGKS) participates in ATP binding.

It belongs to the prokaryotic pantothenate kinase family.

Its subcellular location is the cytoplasm. The catalysed reaction is (R)-pantothenate + ATP = (R)-4'-phosphopantothenate + ADP + H(+). The protein operates within cofactor biosynthesis; coenzyme A biosynthesis; CoA from (R)-pantothenate: step 1/5. The protein is Pantothenate kinase (coaA) of Listeria innocua serovar 6a (strain ATCC BAA-680 / CLIP 11262).